The following is a 180-amino-acid chain: Small ribosomal subunit protein uS5 (180 aa).

The disordered stretch occupies residues 1–20; it reads MAKMQGRMQGKVAPGDDRGD. Positions 22–85 constitute an S5 DRBM domain; sequence LKEKMVAINR…DEARRKMIKV (64 aa).

The protein belongs to the universal ribosomal protein uS5 family. As to quaternary structure, part of the 30S ribosomal subunit. Contacts proteins S4 and S8.

In terms of biological role, with S4 and S12 plays an important role in translational accuracy. Its function is as follows. Located at the back of the 30S subunit body where it stabilizes the conformation of the head with respect to the body. The protein is Small ribosomal subunit protein uS5 of Nitrosospira multiformis (strain ATCC 25196 / NCIMB 11849 / C 71).